The primary structure comprises 367 residues: Glutamate 5-kinase (367 aa).

ATP is bound at residue Lys8. Residues Ser49, Asp136, and Asn148 each coordinate substrate. Residues 168–169 (TD) and 210–216 (TGGMATK) each bind ATP. The PUA domain maps to 275–353 (TGKLYLDRGA…EEIPTILGYS (79 aa)).

This sequence belongs to the glutamate 5-kinase family.

The protein localises to the cytoplasm. The catalysed reaction is L-glutamate + ATP = L-glutamyl 5-phosphate + ADP. The protein operates within amino-acid biosynthesis; L-proline biosynthesis; L-glutamate 5-semialdehyde from L-glutamate: step 1/2. Its function is as follows. Catalyzes the transfer of a phosphate group to glutamate to form L-glutamate 5-phosphate. In Cyanothece sp. (strain PCC 7425 / ATCC 29141), this protein is Glutamate 5-kinase.